The chain runs to 805 residues: Acetyl-CoA decarbonylase/synthase complex subunit alpha 3 (805 aa).

Residues cysteine 72, cysteine 75, cysteine 76, cysteine 78, cysteine 83, and cysteine 93 each contribute to the [4Fe-4S] cluster site. Histidine 116 is a CO binding site. The [Ni-4Fe-4S] cluster site is built by histidine 249, cysteine 277, and cysteine 322. 4Fe-4S ferredoxin-type domains are found at residues 407–435 and 445–474; these read EEFK…IPEA and EYLE…LNVL. [4Fe-4S] cluster-binding residues include cysteine 416, cysteine 419, cysteine 422, cysteine 426, cysteine 454, cysteine 457, cysteine 460, and cysteine 464. [Ni-4Fe-4S] cluster is bound by residues cysteine 522, cysteine 551, and cysteine 586.

Belongs to the Ni-containing carbon monoxide dehydrogenase family. In terms of assembly, heterotetramer of two alpha and two epsilon subunits. The ACDS complex is made up of alpha, epsilon, beta, gamma and delta subunits with a probable stoichiometry of (alpha(2)epsilon(2))(4)-beta(8)-(gamma(1)delta(1))(8). It depends on [4Fe-4S] cluster as a cofactor. [Ni-4Fe-4S] cluster is required as a cofactor.

The catalysed reaction is CO + 2 oxidized [2Fe-2S]-[ferredoxin] + H2O = 2 reduced [2Fe-2S]-[ferredoxin] + CO2 + 2 H(+). It participates in one-carbon metabolism; methanogenesis from acetate. Part of the ACDS complex that catalyzes the reversible cleavage of acetyl-CoA, allowing growth on acetate as sole source of carbon and energy. The alpha-epsilon subcomponent functions as a carbon monoxide dehydrogenase. The sequence is that of Acetyl-CoA decarbonylase/synthase complex subunit alpha 3 from Methanosarcina acetivorans (strain ATCC 35395 / DSM 2834 / JCM 12185 / C2A).